Reading from the N-terminus, the 466-residue chain is Catalase ifgD (466 aa).

Positions 1–22 are disordered; the sequence is MAPNYAKKCPVMGKAPSSGHSS. H48 is an active-site residue. Y337 serves as a coordination point for heme.

This sequence belongs to the catalase family. The cofactor is heme.

It participates in alkaloid biosynthesis; ergot alkaloid biosynthesis. Functionally, catalase; part of the gene cluster that mediates the biosynthesis of isofumigaclavines, fungal ergot alkaloids. The tryptophan dimethylallyltransferase ifgA catalyzes the first step of ergot alkaloid biosynthesis by condensing dimethylallyl diphosphate (DMAP) and tryptophan to form 4-dimethylallyl-L-tryptophan. The second step is catalyzed by the methyltransferase ifgB that methylates 4-dimethylallyl-L-tryptophan in the presence of S-adenosyl-L-methionine, resulting in the formation of N-methyl-dimethylallyl-L-tryptophan. The catalase ifgD and the FAD-dependent oxidoreductase ifgC then transform N-methyl-dimethylallyl-L-tryptophan to chanoclavine-I which is further oxidized by ifgE in the presence of NAD(+), resulting in the formation of chanoclavine-I aldehyde. The chanoclavine-I aldehyde reductases ifgG and/or fgaOx3 reduce chanoclavine-I aldehyde to dihydrochanoclavine-I aldehyde that spontaneously dehydrates to form 6,8-dimethyl-6,7-didehydroergoline. The festuclavine dehydrogenases ifgF1 and/or ifgF2 then catalyze the reduction of 6,8-dimethyl-6,7-didehydroergoline to form festuclavine. Hydrolysis of festuclavine by a yet undetermined cytochrome P450 monooxygenase (called ifgH) then leads to the formation of isofumigaclavine B which is in turn acetylated by ifgI to isofumigaclavine A. Penicillium roqueforti has interestingly at least two sets of genes for the consumption of chanoclavine-I aldehyde on three different loci, the OYEs ifgG/fgaOx3 and the festuclavine synthase homologs ifgF1/ifgF2. The reason for the duplication of these genes is unclear, probably to ensure the conversion of chanoclavine-I aldehyde by differential gene expression under various environmental conditions. The sequence is that of Catalase ifgD from Penicillium roqueforti (strain FM164).